Here is a 150-residue protein sequence, read N- to C-terminus: Sulfur-rich protein, serovar D (150 aa).

Transmembrane regions (helical) follow at residues 41–61 (VGLVVIGLLLVIATLIFLVSA) and 67–87 (AIYLVAIPAILGCVNICVGIL).

The protein localises to the membrane. This is Sulfur-rich protein, serovar D (srp) from Chlamydia trachomatis serovar D (strain ATCC VR-885 / DSM 19411 / UW-3/Cx).